The primary structure comprises 135 residues: Large ribosomal subunit protein uL22 (135 aa).

It belongs to the universal ribosomal protein uL22 family. Part of the 50S ribosomal subunit.

This protein binds specifically to 23S rRNA; its binding is stimulated by other ribosomal proteins, e.g. L4, L17, and L20. It is important during the early stages of 50S assembly. It makes multiple contacts with different domains of the 23S rRNA in the assembled 50S subunit and ribosome. Functionally, the globular domain of the protein is located near the polypeptide exit tunnel on the outside of the subunit, while an extended beta-hairpin is found that lines the wall of the exit tunnel in the center of the 70S ribosome. This is Large ribosomal subunit protein uL22 from Christiangramia forsetii (strain DSM 17595 / CGMCC 1.15422 / KT0803) (Gramella forsetii).